A 258-amino-acid polypeptide reads, in one-letter code: PHD finger protein ALFIN-LIKE 5 (258 aa).

Residues A143 to C205 are disordered. Residues P152–M165 are compositionally biased toward polar residues. Positions D184–R200 are enriched in acidic residues. The PHD-type zinc finger occupies N202–K254.

This sequence belongs to the Alfin family.

Its subcellular location is the nucleus. In terms of biological role, histone-binding component that specifically recognizes H3 tails trimethylated on 'Lys-4' (H3K4me3), which mark transcription start sites of virtually all active genes. The chain is PHD finger protein ALFIN-LIKE 5 from Oryza sativa subsp. indica (Rice).